A 474-amino-acid polypeptide reads, in one-letter code: Recombinase Flp protein (474 aa).

Residues 135–421 (LSNNVGAEIS…LYLYTYAQQK (287 aa)) form the Tyr recombinase Flp-type domain. Y342 serves as the catalytic O-(3'-phospho-DNA)-tyrosine intermediate. Positions 426-474 (ADPNEQNRLFSSESPAHPFLTPQSTGSSTPLTWTAPKTLSTGLMTPGEE) are disordered. Polar residues-rich tracts occupy residues 429–439 (NEQNRLFSSES) and 446–468 (TPQS…STGL).

It belongs to the 'phage' integrase family.

Functionally, catalyzes the recombination between the large inverted repetitions of the plasmid. This is Recombinase Flp protein from Zygosaccharomyces bailii.